Reading from the N-terminus, the 236-residue chain is Leucyl/phenylalanyl-tRNA--protein transferase (236 aa).

Belongs to the L/F-transferase family.

The protein localises to the cytoplasm. It catalyses the reaction N-terminal L-lysyl-[protein] + L-leucyl-tRNA(Leu) = N-terminal L-leucyl-L-lysyl-[protein] + tRNA(Leu) + H(+). The catalysed reaction is N-terminal L-arginyl-[protein] + L-leucyl-tRNA(Leu) = N-terminal L-leucyl-L-arginyl-[protein] + tRNA(Leu) + H(+). The enzyme catalyses L-phenylalanyl-tRNA(Phe) + an N-terminal L-alpha-aminoacyl-[protein] = an N-terminal L-phenylalanyl-L-alpha-aminoacyl-[protein] + tRNA(Phe). In terms of biological role, functions in the N-end rule pathway of protein degradation where it conjugates Leu, Phe and, less efficiently, Met from aminoacyl-tRNAs to the N-termini of proteins containing an N-terminal arginine or lysine. The protein is Leucyl/phenylalanyl-tRNA--protein transferase of Vibrio campbellii (strain ATCC BAA-1116).